The following is a 448-amino-acid chain: Tryptophan dimethylallyltransferase 2 (448 aa).

Residues 80 to 81 and Glu-89 contribute to the L-tryptophan site; that span reads IL. Residues Arg-100, Lys-186, and Tyr-188 each coordinate substrate. L-tryptophan contacts are provided by Tyr-190 and Arg-249. Substrate-binding residues include Arg-262, Lys-264, Tyr-266, Gln-348, Tyr-350, Tyr-414, and Tyr-418.

It belongs to the tryptophan dimethylallyltransferase family. In terms of assembly, homodimer.

The enzyme catalyses L-tryptophan + dimethylallyl diphosphate = 4-(3-methylbut-2-enyl)-L-tryptophan + diphosphate. The protein operates within alkaloid biosynthesis; ergot alkaloid biosynthesis. Its function is as follows. Catalyzes the first step of ergot alkaloid biosynthesis. Ergot alkaloids, which are produced by endophyte fungi, can enhance plant host fitness, but also cause livestock toxicosis to host plants. In Claviceps purpurea (strain 20.1) (Ergot fungus), this protein is Tryptophan dimethylallyltransferase 2 (dmaW2).